We begin with the raw amino-acid sequence, 336 residues long: Fructose-1,6-bisphosphatase class 1 (336 aa).

Mg(2+) contacts are provided by E90, D112, L114, and D115. Residues 115–118 (DGSS), N211, and K277 each bind substrate. E283 is a binding site for Mg(2+).

It belongs to the FBPase class 1 family. In terms of assembly, homotetramer. Requires Mg(2+) as cofactor.

It localises to the cytoplasm. The enzyme catalyses beta-D-fructose 1,6-bisphosphate + H2O = beta-D-fructose 6-phosphate + phosphate. It functions in the pathway carbohydrate biosynthesis; gluconeogenesis. The polypeptide is Fructose-1,6-bisphosphatase class 1 (Pseudomonas syringae pv. syringae (strain B728a)).